We begin with the raw amino-acid sequence, 578 residues long: Arginine--tRNA ligase (578 aa).

The short motif at 127–137 (PNLAKEMHVGH) is the 'HIGH' region element.

The protein belongs to the class-I aminoacyl-tRNA synthetase family. As to quaternary structure, monomer.

It is found in the cytoplasm. It catalyses the reaction tRNA(Arg) + L-arginine + ATP = L-arginyl-tRNA(Arg) + AMP + diphosphate. In Pseudomonas syringae pv. tomato (strain ATCC BAA-871 / DC3000), this protein is Arginine--tRNA ligase.